The sequence spans 320 residues: Cytochrome f (320 aa).

A signal peptide spans 1 to 35 (MQTRNTFSWIREEITRSISVLLMIYIITWASISSA). Tyr-36, Cys-56, Cys-59, and His-60 together coordinate heme. Residues 286–306 (VQGLLFFLGSVVLAQIFLVLK) traverse the membrane as a helical segment.

It belongs to the cytochrome f family. As to quaternary structure, the 4 large subunits of the cytochrome b6-f complex are cytochrome b6, subunit IV (17 kDa polypeptide, petD), cytochrome f and the Rieske protein, while the 4 small subunits are PetG, PetL, PetM and PetN. The complex functions as a dimer. Heme is required as a cofactor.

The protein localises to the plastid. It is found in the chloroplast thylakoid membrane. Its function is as follows. Component of the cytochrome b6-f complex, which mediates electron transfer between photosystem II (PSII) and photosystem I (PSI), cyclic electron flow around PSI, and state transitions. The polypeptide is Cytochrome f (Lobularia maritima (Sweet alyssum)).